Reading from the N-terminus, the 255-residue chain is U2 small nuclear ribonucleoprotein A' (255 aa).

LRR repeat units lie at residues 20-41, 43-64, 65-86, and 89-110; these read RDRE…GATL, QFDA…PLLR, RLKT…LDQA, and CLTE…DPLA. One can recognise an LRRCT domain in the interval 123–161; that stretch reads NPVTNKKHYRLYVIYKVPQVRVLDFQKVKLKERQEAEKM. K172 carries the post-translational modification N6-acetyllysine; alternate. K172 participates in a covalent cross-link: Glycyl lysine isopeptide (Lys-Gly) (interchain with G-Cter in SUMO2); alternate. A disordered region spans residues 174–201; the sequence is IARRSKTFNPGAGLPTDKKKGGPSPGDV. S178 and S197 each carry phosphoserine. K221 is covalently cross-linked (Glycyl lysine isopeptide (Lys-Gly) (interchain with G-Cter in SUMO2)). A disordered region spans residues 222-255; sequence GLLQSGQIPGRERRSGPTDDGEEEMEEDTVTNGS. A phosphoserine mark is found at S236 and S255. Positions 240–255 are enriched in acidic residues; the sequence is DDGEEEMEEDTVTNGS.

The protein belongs to the U2 small nuclear ribonucleoprotein A family. Identified in the spliceosome B complex. Identified in the spliceosome C complex. Found in a pre-mRNA splicing complex with SFRS4, SFRS5, SNRNP70, SNRPA1, SRRM1 and SRRM2. Found in a pre-mRNA exonic splicing enhancer (ESE) complex with SNRNP70, SNRPA1, SRRM1 and TRA2B. Contributes to the binding of stem loop IV of U2 snRNA with SNRPB2.

It is found in the nucleus. Involved in pre-mRNA splicing as component of the spliceosome. Associated with sn-RNP U2, where it contributes to the binding of stem loop IV of U2 snRNA. The polypeptide is U2 small nuclear ribonucleoprotein A' (SNRPA1) (Homo sapiens (Human)).